Here is a 368-residue protein sequence, read N- to C-terminus: MIRTYTQRALAQAWLNRFRGHLPAFACILGFTQTGLIPGISAAGATPADRQYTAIADAEFLLNGPQPQPRYPLPPLTAGASPVLISHAVVSGLGLPVYLFNAGLPIPPAVSAIDLGGEPARCLSTGAALNLATVHHLLTQGLVWGETLADQHPYLLLGECVVGGTTTALAILTGLGYAAATKVNSSHPICNHAQKWEIVQQGLGRSPLKPSHPAPLDLVAAVGDPMQIVVAGMTIAASRKVGVLLAGGTQMLAVYALARAIACTEQLVWQPEAVVVGTTRWVAEDPTGDTVGLAEETDIPLLGSQLSFVRSRFPQLQAYEQGYVKEGVGAGGCAIAASLYRGWGQQELLTAIEAVGDRYSQVSAGSGG.

Belongs to the UPF0284 family.

The protein is UPF0284 protein Cyan7425_0342 of Cyanothece sp. (strain PCC 7425 / ATCC 29141).